The following is a 179-amino-acid chain: UPF0227 protein PM0825 (179 aa).

Belongs to the UPF0227 family.

In Pasteurella multocida (strain Pm70), this protein is UPF0227 protein PM0825.